A 212-amino-acid polypeptide reads, in one-letter code: Fibrillarin-like rRNA/tRNA 2'-O-methyltransferase (212 aa).

Residues 73–74 (TT), 91–92 (EI), 116–117 (DA), and 136–139 (DVAQ) each bind S-adenosyl-L-methionine.

This sequence belongs to the methyltransferase superfamily. Fibrillarin family. As to quaternary structure, interacts with nop5. Component of box C/D small ribonucleoprotein (sRNP) particles that contain rpl7ae, FlpA and nop5, plus a guide RNA.

Its function is as follows. Involved in pre-rRNA and tRNA processing. Utilizes the methyl donor S-adenosyl-L-methionine to catalyze the site-specific 2'-hydroxyl methylation of ribose moieties in rRNA and tRNA. Site specificity is provided by a guide RNA that base pairs with the substrate. Methylation occurs at a characteristic distance from the sequence involved in base pairing with the guide RNA. The protein is Fibrillarin-like rRNA/tRNA 2'-O-methyltransferase of Methanothrix thermoacetophila (strain DSM 6194 / JCM 14653 / NBRC 101360 / PT) (Methanosaeta thermophila).